A 195-amino-acid chain; its full sequence is Probable WRKY transcription factor 56 (195 aa).

Polar residues predominate over residues 1 to 10; it reads MEGVDNTNPM. Disordered regions lie at residues 1–20 and 70–93; these read MEGV…ENNN and EMGG…KGKG. The WRKY DNA-binding region spans 108 to 173; that stretch reads SDDDVLDDGY…YEGVHNHPCE (66 aa).

The protein belongs to the WRKY group II-c family.

Its subcellular location is the nucleus. Its function is as follows. Transcription factor. Interacts specifically with the W box (5'-(T)TGAC[CT]-3'), a frequently occurring elicitor-responsive cis-acting element. The protein is Probable WRKY transcription factor 56 (WRKY56) of Arabidopsis thaliana (Mouse-ear cress).